Reading from the N-terminus, the 413-residue chain is Replication factor C large subunit (413 aa).

Residue 54 to 61 (GPPGSGKT) participates in ATP binding.

It belongs to the activator 1 small subunits family. RfcL subfamily. Heteromultimer composed of small subunits (RfcS) and large subunits (RfcL).

In terms of biological role, part of the RFC clamp loader complex which loads the PCNA sliding clamp onto DNA. The chain is Replication factor C large subunit from Thermofilum pendens (strain DSM 2475 / Hrk 5).